The primary structure comprises 69 residues: uncharacterized protein (69 aa).

Positions 1–18 (MAMLWISMFIIMRKYGRS) are cleaved as a signal peptide. The disordered stretch occupies residues 17–69 (RSSSSSSSSSSSSSSSSSSSSSSSSSSSSSSSSSSSSSSSSGSSSNSNRVVVV). Residues 18 to 61 (SSSSSSSSSSSSSSSSSSSSSSSSSSSSSSSSSSSSSSSSGSSS) are compositionally biased toward low complexity.

The protein resides in the secreted. This is an uncharacterized protein from Dictyostelium discoideum (Social amoeba).